A 356-amino-acid chain; its full sequence is 3-isopropylmalate dehydrogenase (356 aa).

Substrate is bound by residues arginine 90, arginine 100, arginine 128, and aspartate 222. The Mg(2+) site is built by aspartate 222, aspartate 246, and aspartate 250. 280-292 lines the NAD(+) pocket; it reads GSAPDIAGKGVAN.

Belongs to the isocitrate and isopropylmalate dehydrogenases family. LeuB type 1 subfamily. In terms of assembly, homodimer. The cofactor is Mg(2+). Mn(2+) serves as cofactor.

Its subcellular location is the cytoplasm. It carries out the reaction (2R,3S)-3-isopropylmalate + NAD(+) = 4-methyl-2-oxopentanoate + CO2 + NADH. The protein operates within amino-acid biosynthesis; L-leucine biosynthesis; L-leucine from 3-methyl-2-oxobutanoate: step 3/4. In terms of biological role, catalyzes the oxidation of 3-carboxy-2-hydroxy-4-methylpentanoate (3-isopropylmalate) to 3-carboxy-4-methyl-2-oxopentanoate. The product decarboxylates to 4-methyl-2 oxopentanoate. The polypeptide is 3-isopropylmalate dehydrogenase (Albidiferax ferrireducens (strain ATCC BAA-621 / DSM 15236 / T118) (Rhodoferax ferrireducens)).